Here is a 564-residue protein sequence, read N- to C-terminus: Hexose transporter HXT17 (564 aa).

Over residues 1–12 the composition is skewed to basic and acidic residues; sequence MQSSTESDRDIQ. A disordered region spans residues 1 to 22; it reads MQSSTESDRDIQDGPDADIHVA. Topologically, residues 1 to 52 are cytoplasmic; it reads MQSSTESDRDIQDGPDADIHVAPPVEKEWSDGFDDNEVINGDNVEPPKRGLI. A helical transmembrane segment spans residues 53-73; sequence GYLVIYLLCYPISFGGFLPGW. Over 74 to 109 the chain is Extracellular; it reads DSGITAGFINMDNFKMNFGSYKHSTGEYYLSNVRMG. A helical membrane pass occupies residues 110 to 130; that stretch reads LLVAMFSIGCAIGGLIFARLA. Topologically, residues 131–136 are cytoplasmic; the sequence is DTLGRR. A helical transmembrane segment spans residues 137–157; it reads LAIVIVVLVYMVGAIIQISSN. At 158–167 the chain is on the extracellular side; the sequence is HKWYQYFVGK. A helical membrane pass occupies residues 168–188; sequence IIYGLGAGGCSVLCPMLLSEI. Over 189–194 the chain is Cytoplasmic; sequence APTDLR. Residues 195 to 215 form a helical membrane-spanning segment; it reads GGLVSLYQLNMTFGIFLGYCS. At 216–229 the chain is on the extracellular side; it reads VYGTRKYDNTAQWR. The chain crosses the membrane as a helical span at residues 230–250; the sequence is VPLGLCFLWTLIIIIGMLLVP. Residues 251 to 333 lie on the Cytoplasmic side of the membrane; it reads ESPRYLIECE…VQTFLQLTGE (83 aa). A helical membrane pass occupies residues 334–350; the sequence is NYFFFYGTTIFKSVGLT. Residues 351-356 lie on the Extracellular side of the membrane; that stretch reads DGFETS. Residues 357 to 374 form a helical membrane-spanning segment; sequence IVLGTVNFFSTIIAVMVV. The Cytoplasmic segment spans residues 375-381; that stretch reads DKIGRRK. Residues 382 to 402 traverse the membrane as a helical segment; sequence CLLFGAAGMMACMVIFASIGV. Residues 403 to 424 lie on the Extracellular side of the membrane; the sequence is KCLYPHGQDGPSSKGAGNAMIV. A helical membrane pass occupies residues 425-445; the sequence is FTCFYIFCFATTWAPVAYIVV. Residues 446–462 are Cytoplasmic-facing; that stretch reads AESFPSKVKSRAMSIST. Residues 463–483 form a helical membrane-spanning segment; the sequence is ACNWLWQFLIGFFTPFITGSI. Residue H484 is a topological domain, extracellular. Residues 485–505 traverse the membrane as a helical segment; it reads FYYGYVFVGCLVAMFLYVFFF. At 506-564 the chain is on the cytoplasmic side; it reads LPETIGLSLEEIQLLYEEGIKPWKSASWVPPSRRGIPSEESKTEKKDWKKFLKFSKGSD.

It belongs to the major facilitator superfamily. Sugar transporter (TC 2.A.1.1) family.

The protein localises to the membrane. Functionally, probable glucose transporter. This Saccharomyces cerevisiae (strain ATCC 204508 / S288c) (Baker's yeast) protein is Hexose transporter HXT17 (HXT17).